The primary structure comprises 266 residues: uncharacterized protein (266 aa).

The signal sequence occupies residues methionine 1–glycine 22. The N-palmitoyl cysteine moiety is linked to residue cysteine 23. The S-diacylglycerol cysteine moiety is linked to residue cysteine 23.

The protein belongs to the staphylococcal tandem lipoprotein family.

The protein resides in the cell membrane. This is an uncharacterized protein from Staphylococcus aureus (strain USA300).